Here is a 176-residue protein sequence, read N- to C-terminus: Ribosome rescue factor SmrB (176 aa).

One can recognise a Smr domain in the interval 97 to 172; that stretch reads LDMHGMTQQE…GDGALLVLLS (76 aa).

The protein belongs to the SmrB family. In terms of assembly, associates with collided ribosomes, but not with correctly translating polysomes.

Functionally, acts as a ribosome collision sensor. Detects stalled/collided disomes (pairs of ribosomes where the leading ribosome is stalled and a second ribosome has collided with it) and endonucleolytically cleaves mRNA at the 5' boundary of the stalled ribosome. Stalled/collided disomes form a new interface (primarily via the 30S subunits) that binds SmrB. Cleaved mRNA becomes available for tmRNA ligation, leading to ribosomal subunit dissociation and rescue of stalled ribosomes. The protein is Ribosome rescue factor SmrB of Vibrio campbellii (strain ATCC BAA-1116).